The chain runs to 301 residues: UBX domain-containing protein 2 (301 aa).

A disordered region spans residues Met1 to His61. The SEP domain occupies Thr89–Val153. Residues Gly176–Ala200 are disordered. Residues Ser178–Thr192 show a composition bias toward low complexity. The UBX domain maps to Met218–Lys295.

Belongs to the NSFL1C family. Interacts with cdc-48.1 (via N-terminus) and cdc-48.2 (via N-terminus). Interacts with kinase air-1. In terms of tissue distribution, expressed in the germline (at protein level). Expressed in spermatocytes but not in mature sperm (at protein level). Ubiquitously expressed. Predominantly expressed in the spermatheca.

It is found in the cytoplasm. The protein resides in the perinuclear region. Its subcellular location is the nucleus. The protein localises to the cytoskeleton. It localises to the microtubule organizing center. It is found in the centrosome. Its function is as follows. Ubiquitin-binding protein which acts as an adapter for ATPase cdc-48.1 and/or cdc-48.2, conferring substrate specificity. Together with ubxn-2 and ubxn-3, plays a role in hermaphrodite spermatogenesis probably by promoting the degradation of sex determination terminal factor tra-1. Probably in association with ATPase cdc-48.1 or/and cdc-48.2, regulates the centrosomal levels of kinase air-1 levels during mitotic progression by promoting air-1 removal from centrosomes in prophase. Also, regulates spindle orientation in the one-cell embryo by controlling centration and rotation of the pronuclei-centrosome complex in prophase. This chain is UBX domain-containing protein 2, found in Caenorhabditis elegans.